A 142-amino-acid polypeptide reads, in one-letter code: Large ribosomal subunit protein uL13 (142 aa).

Belongs to the universal ribosomal protein uL13 family. As to quaternary structure, part of the 50S ribosomal subunit.

In terms of biological role, this protein is one of the early assembly proteins of the 50S ribosomal subunit, although it is not seen to bind rRNA by itself. It is important during the early stages of 50S assembly. This Lachnospira eligens (strain ATCC 27750 / DSM 3376 / VPI C15-48 / C15-B4) (Eubacterium eligens) protein is Large ribosomal subunit protein uL13.